We begin with the raw amino-acid sequence, 208 residues long: 2-phospho-L-lactate guanylyltransferase (208 aa).

This sequence belongs to the CofC family. In terms of assembly, homodimer.

It catalyses the reaction (2S)-2-phospholactate + GTP + H(+) = (2S)-lactyl-2-diphospho-5'-guanosine + diphosphate. Its pathway is cofactor biosynthesis; coenzyme F420 biosynthesis. Functionally, guanylyltransferase that catalyzes the activation of (2S)-2-phospholactate (2-PL) as (2S)-lactyl-2-diphospho-5'-guanosine, via the condensation of 2-PL with GTP. It is involved in the biosynthesis of coenzyme F420, a hydride carrier cofactor. This Haloarcula marismortui (strain ATCC 43049 / DSM 3752 / JCM 8966 / VKM B-1809) (Halobacterium marismortui) protein is 2-phospho-L-lactate guanylyltransferase.